The primary structure comprises 615 residues: Isocitrate dehydrogenase kinase/phosphatase (615 aa).

ATP is bound by residues 325 to 331 (APGIKGM) and Lys-346. Asp-381 is an active-site residue.

Belongs to the AceK family.

It localises to the cytoplasm. It carries out the reaction L-seryl-[isocitrate dehydrogenase] + ATP = O-phospho-L-seryl-[isocitrate dehydrogenase] + ADP + H(+). Bifunctional enzyme which can phosphorylate or dephosphorylate isocitrate dehydrogenase (IDH) on a specific serine residue. This is a regulatory mechanism which enables bacteria to bypass the Krebs cycle via the glyoxylate shunt in response to the source of carbon. When bacteria are grown on glucose, IDH is fully active and unphosphorylated, but when grown on acetate or ethanol, the activity of IDH declines drastically concomitant with its phosphorylation. In Albidiferax ferrireducens (strain ATCC BAA-621 / DSM 15236 / T118) (Rhodoferax ferrireducens), this protein is Isocitrate dehydrogenase kinase/phosphatase.